The chain runs to 388 residues: Succinate--CoA ligase [ADP-forming] subunit beta (388 aa).

Residues 9–244 (KEIFRSMGVA…LEEEDPKEIE (236 aa)) form the ATP-grasp domain. ATP is bound by residues K46, 53–55 (GRG), E99, C102, and E107. The Mg(2+) site is built by N199 and D213. Substrate is bound by residues N264 and 321–323 (GIM).

This sequence belongs to the succinate/malate CoA ligase beta subunit family. As to quaternary structure, heterotetramer of two alpha and two beta subunits. It depends on Mg(2+) as a cofactor.

It carries out the reaction succinate + ATP + CoA = succinyl-CoA + ADP + phosphate. It catalyses the reaction GTP + succinate + CoA = succinyl-CoA + GDP + phosphate. The protein operates within carbohydrate metabolism; tricarboxylic acid cycle; succinate from succinyl-CoA (ligase route): step 1/1. In terms of biological role, succinyl-CoA synthetase functions in the citric acid cycle (TCA), coupling the hydrolysis of succinyl-CoA to the synthesis of either ATP or GTP and thus represents the only step of substrate-level phosphorylation in the TCA. The beta subunit provides nucleotide specificity of the enzyme and binds the substrate succinate, while the binding sites for coenzyme A and phosphate are found in the alpha subunit. The chain is Succinate--CoA ligase [ADP-forming] subunit beta from Staphylococcus epidermidis (strain ATCC 35984 / DSM 28319 / BCRC 17069 / CCUG 31568 / BM 3577 / RP62A).